Consider the following 294-residue polypeptide: sn-glycerol-3-phosphate transport system permease protein UgpA (294 aa).

Residues 1–11 (MSPSRPGFSCS) are Cytoplasmic-facing. The chain crosses the membrane as a helical span at residues 12–32 (WLPYLLVLPQLAITAIFFLWP). Residues 33-80 (AGEALWYSVQTLDPFGLSSEFVGLSNFIQLFQDEYYLASFYTTLIFSA) are Periplasmic-facing. Positions 72–284 (FYTTLIFSAL…LLVIGLTVIQ (213 aa)) constitute an ABC transmembrane type-1 domain. The chain crosses the membrane as a helical span at residues 81–101 (LVAGIGLNVSLFLAAMVDYVL). The Cytoplasmic segment spans residues 102 to 109 (RGSRLYQT). The chain crosses the membrane as a helical span at residues 110–130 (LLILPYAVAPAVAAVLWIFLF). Residues 131-157 (DPGLGLITHALAKLGYSWNHAQNSGQA) are Periplasmic-facing. Residues 158–178 (MFLVVLASVWKQISYNFLFFL) traverse the membrane as a helical segment. Residues 179-207 (AALQSIPKSLVEAAAIDGAGPVRRFFNLV) are Cytoplasmic-facing. A helical transmembrane segment spans residues 208–228 (LPLISPVSFFLLVVNLVYAFF). The Periplasmic portion of the chain corresponds to 229–262 (DTFPVIDAATGGGPVQATTTLIYKIYREGFAGLD). The helical transmembrane segment at 263–283 (LSSSAAQSVILMLLVIGLTVI) threads the bilayer. The Cytoplasmic portion of the chain corresponds to 284-294 (QFRFVERKVRY).

Belongs to the binding-protein-dependent transport system permease family. UgpAE subfamily. In terms of assembly, the complex is composed of two ATP-binding proteins (UgpC), two transmembrane proteins (UgpA and UgpE) and a solute-binding protein (UgpB).

It is found in the cell inner membrane. Its function is as follows. Part of the ABC transporter complex UgpBAEC involved in sn-glycerol-3-phosphate (G3P) import. Probably responsible for the translocation of the substrate across the membrane. This chain is sn-glycerol-3-phosphate transport system permease protein UgpA (ugpA), found in Yersinia pseudotuberculosis serotype I (strain IP32953).